Here is a 161-residue protein sequence, read N- to C-terminus: Probable chemoreceptor glutamine deamidase CheD (161 aa).

This sequence belongs to the CheD family.

The enzyme catalyses L-glutaminyl-[protein] + H2O = L-glutamyl-[protein] + NH4(+). Probably deamidates glutamine residues to glutamate on methyl-accepting chemotaxis receptors (MCPs), playing an important role in chemotaxis. This is Probable chemoreceptor glutamine deamidase CheD from Thermococcus kodakarensis (strain ATCC BAA-918 / JCM 12380 / KOD1) (Pyrococcus kodakaraensis (strain KOD1)).